The sequence spans 105 residues: Large ribosomal subunit protein uL24 (105 aa).

This sequence belongs to the universal ribosomal protein uL24 family. As to quaternary structure, part of the 50S ribosomal subunit.

In terms of biological role, one of two assembly initiator proteins, it binds directly to the 5'-end of the 23S rRNA, where it nucleates assembly of the 50S subunit. One of the proteins that surrounds the polypeptide exit tunnel on the outside of the subunit. The chain is Large ribosomal subunit protein uL24 from Xylella fastidiosa (strain 9a5c).